The chain runs to 217 residues: tRNA (guanine-N(7)-)-methyltransferase (217 aa).

Positions 44, 69, 96, and 118 each coordinate S-adenosyl-L-methionine. Residue Asp-118 is part of the active site. Substrate is bound by residues Lys-122, Asp-154, and 191 to 194; that span reads TEYE.

This sequence belongs to the class I-like SAM-binding methyltransferase superfamily. TrmB family.

It carries out the reaction guanosine(46) in tRNA + S-adenosyl-L-methionine = N(7)-methylguanosine(46) in tRNA + S-adenosyl-L-homocysteine. The protein operates within tRNA modification; N(7)-methylguanine-tRNA biosynthesis. Its function is as follows. Catalyzes the formation of N(7)-methylguanine at position 46 (m7G46) in tRNA. The sequence is that of tRNA (guanine-N(7)-)-methyltransferase from Bacillus cereus (strain B4264).